Reading from the N-terminus, the 327-residue chain is Annexin A8 (327 aa).

Annexin repeat units lie at residues 21–92, 93–164, 177–249, and 253–324; these read FNPD…ALMY, PPYR…CLLQ, GLAL…TVVK, and NLHG…NLVG. Met266, Gly268, Gly270, and Asp310 together coordinate Ca(2+).

This sequence belongs to the annexin family.

Functionally, this protein is an anticoagulant protein that acts as an indirect inhibitor of the thromboplastin-specific complex, which is involved in the blood coagulation cascade. This Bos taurus (Bovine) protein is Annexin A8 (ANXA8).